Reading from the N-terminus, the 960-residue chain is Endoplasmic reticulum aminopeptidase 2 (960 aa).

The Cytoplasmic segment spans residues 1–20 (MFHSSAMVNSHRKPMFNIHR). Residues 21–40 (GFYCLTAILPQICICSQFSV) form a helical; Signal-anchor for type II membrane protein membrane-spanning segment. The Lumenal portion of the chain corresponds to 41–960 (PSSYHFTEDP…TLRTWLMVNT (920 aa)). Residues N85 and N119 are each glycosylated (N-linked (GlcNAc...) asparagine). E200 is a substrate binding site. N219 is a glycosylation site (N-linked (GlcNAc...) asparagine). 334-338 (GAMEN) is a substrate binding site. H370 lines the Zn(2+) pocket. E371 (proton acceptor) is an active-site residue. H374 and E393 together coordinate Zn(2+). Residue N405 is glycosylated (N-linked (GlcNAc...) asparagine). The cysteines at positions 421 and 460 are disulfide-linked. An N-linked (GlcNAc...) asparagine glycan is attached at N650. A disulfide bridge connects residues C759 and C766.

Belongs to the peptidase M1 family. As to quaternary structure, heterodimer with ERAP1. It depends on Zn(2+) as a cofactor. In terms of processing, N-glycosylated. As to expression, ubiquitously expressed. Highly expressed in spleen and leukocytes.

The protein resides in the endoplasmic reticulum membrane. Aminopeptidase that plays a central role in peptide trimming, a step required for the generation of most HLA class I-binding peptides. Peptide trimming is essential to customize longer precursor peptides to fit them to the correct length required for presentation on MHC class I molecules. Preferentially hydrolyzes the basic residues Arg and Lys. The sequence is that of Endoplasmic reticulum aminopeptidase 2 (ERAP2) from Homo sapiens (Human).